Consider the following 404-residue polypeptide: Nicotinate phosphoribosyltransferase (404 aa).

His225 is modified (phosphohistidine; by autocatalysis).

Belongs to the NAPRTase family. Post-translationally, transiently phosphorylated on a His residue during the reaction cycle. Phosphorylation strongly increases the affinity for substrates and increases the rate of nicotinate D-ribonucleotide production. Dephosphorylation regenerates the low-affinity form of the enzyme, leading to product release.

The enzyme catalyses nicotinate + 5-phospho-alpha-D-ribose 1-diphosphate + ATP + H2O = nicotinate beta-D-ribonucleotide + ADP + phosphate + diphosphate. Its pathway is cofactor biosynthesis; NAD(+) biosynthesis; nicotinate D-ribonucleotide from nicotinate: step 1/1. Its function is as follows. Catalyzes the synthesis of beta-nicotinate D-ribonucleotide from nicotinate and 5-phospho-D-ribose 1-phosphate at the expense of ATP. This Acinetobacter baumannii (strain ATCC 17978 / DSM 105126 / CIP 53.77 / LMG 1025 / NCDC KC755 / 5377) protein is Nicotinate phosphoribosyltransferase.